Here is a 143-residue protein sequence, read N- to C-terminus: Small ribosomal subunit protein uS11c (143 aa).

It belongs to the universal ribosomal protein uS11 family. In terms of assembly, part of the 30S ribosomal subunit.

The protein resides in the plastid. It localises to the chloroplast. The chain is Small ribosomal subunit protein uS11c from Cenchrus americanus (Pearl millet).